A 343-amino-acid polypeptide reads, in one-letter code: Phenylalanine--tRNA ligase alpha subunit (343 aa).

Position 268 (Glu268) interacts with Mg(2+).

It belongs to the class-II aminoacyl-tRNA synthetase family. Phe-tRNA synthetase alpha subunit type 1 subfamily. In terms of assembly, tetramer of two alpha and two beta subunits. It depends on Mg(2+) as a cofactor.

The protein localises to the cytoplasm. The enzyme catalyses tRNA(Phe) + L-phenylalanine + ATP = L-phenylalanyl-tRNA(Phe) + AMP + diphosphate + H(+). The sequence is that of Phenylalanine--tRNA ligase alpha subunit from Cupriavidus necator (strain ATCC 17699 / DSM 428 / KCTC 22496 / NCIMB 10442 / H16 / Stanier 337) (Ralstonia eutropha).